Reading from the N-terminus, the 314-residue chain is tRNA N6-adenosine threonylcarbamoyltransferase (314 aa).

3 residues coordinate Fe cation: H106, H110, and Y127. Substrate contacts are provided by residues 127 to 131 (YVSGA), D159, G172, E176, and N255. D283 contributes to the Fe cation binding site.

The protein belongs to the KAE1 / TsaD family. Fe(2+) is required as a cofactor.

It is found in the cytoplasm. The catalysed reaction is L-threonylcarbamoyladenylate + adenosine(37) in tRNA = N(6)-L-threonylcarbamoyladenosine(37) in tRNA + AMP + H(+). Functionally, required for the formation of a threonylcarbamoyl group on adenosine at position 37 (t(6)A37) in tRNAs that read codons beginning with adenine. Is probably involved in the transfer of the threonylcarbamoyl moiety of threonylcarbamoyl-AMP (TC-AMP) to the N6 group of A37. This Nanoarchaeum equitans (strain Kin4-M) protein is tRNA N6-adenosine threonylcarbamoyltransferase.